The chain runs to 985 residues: Alpha-glucosidase (985 aa).

The N-terminal stretch at 1–25 is a signal peptide; sequence MAGLKSFLASSWLLPVACGASQSIV. Asn126, Asn145, Asn220, Asn255, Asn349, and Asn424 each carry an N-linked (GlcNAc...) asparagine glycan. The active-site Nucleophile is the Asp492. Glu495 is a catalytic residue. N-linked (GlcNAc...) asparagine glycans are attached at residues Asn508, Asn536, Asn539, Asn602, and Asn624. The active-site Proton donor is the Asp660. 5 N-linked (GlcNAc...) asparagine glycosylation sites follow: Asn661, Asn835, Asn881, Asn929, and Asn957.

It belongs to the glycosyl hydrolase 31 family.

It carries out the reaction Hydrolysis of terminal, non-reducing (1-&gt;4)-linked alpha-D-glucose residues with release of alpha-D-glucose.. In terms of biological role, hydrolyzes malto-oligosaccharides, but has a low activity toward soluble starch. This chain is Alpha-glucosidase (agdA), found in Aspergillus oryzae (strain ATCC 42149 / RIB 40) (Yellow koji mold).